The primary structure comprises 242 residues: Invasion chromosome antigen R (242 aa).

It is found in the secreted. Its function is as follows. May contribute to pathogenesis, although some of its characteristics suggest it is a fossil gene. This Shigella flexneri serotype 5a (strain M90T) protein is Invasion chromosome antigen R.